We begin with the raw amino-acid sequence, 44 residues long: Relaxin (44 aa).

Q1 carries the pyrrolidone carboxylic acid modification. Intrachain disulfides connect C3–C31, C15–C44, and C30–C35.

This sequence belongs to the insulin family. Heterodimer of a B chain and an A chain linked by two disulfide bonds.

The protein localises to the secreted. This chain is Relaxin, found in Carcharias taurus (Sand tiger shark).